The primary structure comprises 316 residues: Transcription factor MafB (316 aa).

2 disordered regions span residues proline 40–glutamate 78 and histidine 116–phenylalanine 204. A compositionally biased stretch (low complexity) spans serine 55 to threonine 77. 2 stretches are compositionally biased toward basic residues: residues glycine 130 to histidine 144 and glutamine 160 to glutamine 172. Over residues proline 177–serine 198 the composition is skewed to low complexity. Positions arginine 231–lysine 256 are basic motif. Residues arginine 231–leucine 294 enclose the bZIP domain. Positions leucine 259–leucine 280 are leucine-zipper.

The protein belongs to the bZIP family. Maf subfamily. In terms of assembly, homodimer or heterodimer with other bHLH-Zip transcription factors. Binds DNA as a homodimer or a heterodimer.

The protein resides in the nucleus. In terms of biological role, acts as a transcriptional activator or repressor. Implicated in the regulation of cell-type specific gene expression and play a role in inductive events during lens development. This is Transcription factor MafB (mafb) from Xenopus tropicalis (Western clawed frog).